We begin with the raw amino-acid sequence, 301 residues long: Small ribosomal subunit biogenesis GTPase RsgA (301 aa).

A CP-type G domain is found at 63 to 224; it reads INALVRPPIA…IADTPGFSSY (162 aa). GTP-binding positions include 112-115 and 167-175; these read SKAD and GQTGAGKST. Zn(2+) is bound by residues C248, C253, H255, and C261.

Belongs to the TRAFAC class YlqF/YawG GTPase family. RsgA subfamily. Monomer. Associates with 30S ribosomal subunit, binds 16S rRNA. Zn(2+) serves as cofactor.

Its subcellular location is the cytoplasm. Its function is as follows. One of several proteins that assist in the late maturation steps of the functional core of the 30S ribosomal subunit. Helps release RbfA from mature subunits. May play a role in the assembly of ribosomal proteins into the subunit. Circularly permuted GTPase that catalyzes slow GTP hydrolysis, GTPase activity is stimulated by the 30S ribosomal subunit. This chain is Small ribosomal subunit biogenesis GTPase RsgA, found in Leuconostoc citreum (strain KM20).